Reading from the N-terminus, the 194-residue chain is Large ribosomal subunit protein uL5 (194 aa).

Belongs to the universal ribosomal protein uL5 family. In terms of assembly, part of the 50S ribosomal subunit; part of the 5S rRNA/L5/L18/L25 subcomplex. Contacts the 5S rRNA and the P site tRNA. Forms a bridge to the 30S subunit in the 70S ribosome.

Functionally, this is one of the proteins that bind and probably mediate the attachment of the 5S RNA into the large ribosomal subunit, where it forms part of the central protuberance. In the 70S ribosome it contacts protein S13 of the 30S subunit (bridge B1b), connecting the 2 subunits; this bridge is implicated in subunit movement. Contacts the P site tRNA; the 5S rRNA and some of its associated proteins might help stabilize positioning of ribosome-bound tRNAs. This is Large ribosomal subunit protein uL5 from Frankia alni (strain DSM 45986 / CECT 9034 / ACN14a).